The following is a 145-amino-acid chain: D-aminoacyl-tRNA deacylase (145 aa).

The short motif at 137–138 (GP) is the Gly-cisPro motif, important for rejection of L-amino acids element.

Belongs to the DTD family. As to quaternary structure, homodimer.

It localises to the cytoplasm. It carries out the reaction glycyl-tRNA(Ala) + H2O = tRNA(Ala) + glycine + H(+). It catalyses the reaction a D-aminoacyl-tRNA + H2O = a tRNA + a D-alpha-amino acid + H(+). In terms of biological role, an aminoacyl-tRNA editing enzyme that deacylates mischarged D-aminoacyl-tRNAs. Also deacylates mischarged glycyl-tRNA(Ala), protecting cells against glycine mischarging by AlaRS. Acts via tRNA-based rather than protein-based catalysis; rejects L-amino acids rather than detecting D-amino acids in the active site. By recycling D-aminoacyl-tRNA to D-amino acids and free tRNA molecules, this enzyme counteracts the toxicity associated with the formation of D-aminoacyl-tRNA entities in vivo and helps enforce protein L-homochirality. The chain is D-aminoacyl-tRNA deacylase from Francisella tularensis subsp. holarctica (strain FTNF002-00 / FTA).